We begin with the raw amino-acid sequence, 217 residues long: Large ribosomal subunit protein uL1 (217 aa).

It belongs to the universal ribosomal protein uL1 family. Component of the large ribosomal subunit (LSU). Mature ribosomes consist of a small (40S) and a large (60S) subunit. The 40S subunit contains about 32 different proteins and 1 molecule of RNA (18S). The 60S subunit contains 45 different proteins and 3 molecules of RNA (25S, 5.8S and 5S). uL1 forms part of the L1 stalk.

The protein localises to the cytoplasm. Component of the ribosome, a large ribonucleoprotein complex responsible for the synthesis of proteins in the cell. The small ribosomal subunit (SSU) binds messenger RNAs (mRNAs) and translates the encoded message by selecting cognate aminoacyl-transfer RNA (tRNA) molecules. The large subunit (LSU) contains the ribosomal catalytic site termed the peptidyl transferase center (PTC), which catalyzes the formation of peptide bonds, thereby polymerizing the amino acids delivered by tRNAs into a polypeptide chain. The nascent polypeptides leave the ribosome through a tunnel in the LSU and interact with protein factors that function in enzymatic processing, targeting, and the membrane insertion of nascent chains at the exit of the ribosomal tunnel. uL1 forms part of the L1 stalk, a mobile element that plays a role in evacuating the exit-site tRNA. The sequence is that of Large ribosomal subunit protein uL1 (RPL10A) from Candida albicans (strain SC5314 / ATCC MYA-2876) (Yeast).